The chain runs to 178 residues: Arginine repressor (178 aa).

Residues 1–20 form a disordered region; sequence MTEAQEPEYGGPSVPQTRTA.

The protein belongs to the ArgR family.

Its subcellular location is the cytoplasm. Its pathway is amino-acid biosynthesis; L-arginine biosynthesis [regulation]. Functionally, regulates arginine biosynthesis genes. The chain is Arginine repressor from Streptomyces griseus subsp. griseus (strain JCM 4626 / CBS 651.72 / NBRC 13350 / KCC S-0626 / ISP 5235).